A 134-amino-acid polypeptide reads, in one-letter code: Small ribosomal subunit protein bS16 (134 aa).

Residues 79-134 form a disordered region; it reads AGIAKRPSRNNPTKGEPGKKAQERLALAKQAEEEAAAKAAEAAAAAAAPAEEAASE. Residues 115 to 134 show a composition bias toward low complexity; it reads AKAAEAAAAAAAPAEEAASE.

It belongs to the bacterial ribosomal protein bS16 family.

The protein is Small ribosomal subunit protein bS16 of Brucella suis (strain ATCC 23445 / NCTC 10510).